The following is a 197-amino-acid chain: OV-16 antigen (197 aa).

Positions 1–16 (MHCLQVVIAIVLYSFG) are cleaved as a signal peptide. N-linked (GlcNAc...) asparagine glycans are attached at residues asparagine 56, asparagine 61, asparagine 119, and asparagine 124.

It belongs to the phosphatidylethanolamine-binding protein family. Hypodermis, cuticle and uterus.

This is OV-16 antigen (OV16) from Onchocerca volvulus.